The sequence spans 359 residues: Peptide chain release factor 1 (359 aa).

The residue at position 238 (Gln-238) is an N5-methylglutamine.

This sequence belongs to the prokaryotic/mitochondrial release factor family. In terms of processing, methylated by PrmC. Methylation increases the termination efficiency of RF1.

It localises to the cytoplasm. Its function is as follows. Peptide chain release factor 1 directs the termination of translation in response to the peptide chain termination codons UAG and UAA. In Mycoplasmopsis pulmonis (strain UAB CTIP) (Mycoplasma pulmonis), this protein is Peptide chain release factor 1.